We begin with the raw amino-acid sequence, 125 residues long: Small ribosomal subunit protein uS12m (125 aa).

Disordered stretches follow at residues 1 to 50 (MPTL…SAPR) and 106 to 125 (GIPN…PKSI). The span at 10–23 (HGREEKRRTDRTRA) shows a compositional bias: basic and acidic residues.

Belongs to the universal ribosomal protein uS12 family.

It is found in the mitochondrion. Protein S12 is involved in the translation initiation step. This is Small ribosomal subunit protein uS12m (RPS12) from Magnolia soulangeana (Saucer magnolia).